The primary structure comprises 88 residues: UPF0223 protein RBAM_014500 (88 aa).

This sequence belongs to the UPF0223 family.

This is UPF0223 protein RBAM_014500 from Bacillus velezensis (strain DSM 23117 / BGSC 10A6 / LMG 26770 / FZB42) (Bacillus amyloliquefaciens subsp. plantarum).